The following is a 567-amino-acid chain: CTD small phosphatase-like protein 2 (567 aa).

Disordered regions lie at residues 31-53, 100-150, and 280-361; these read QQQQ…HQCE, ASST…FSSV, and NKEN…EEFN. Composition is skewed to low complexity over residues 100–118, 130–150, and 286–297; these read ASST…SPLK, SMND…FSSV, and ESNNSNSNSNSS. Residues 298–308 show a composition bias toward polar residues; the sequence is PSFFHNLQQHP. A compositionally biased stretch (low complexity) spans 309–332; the sequence is TSAATTTTTTTTTITTTSATTSII. Positions 337–360 are enriched in acidic residues; it reads NSDDEIDDECDDESEEEEEDEEEF. The 159-residue stretch at 386-544 folds into the FCP1 homology domain; it reads HSSPKISLVL…LQLVPFLESL (159 aa).

This sequence belongs to the CTDSPL2 family.

Its function is as follows. Probable phosphatase. The sequence is that of CTD small phosphatase-like protein 2 (ctdspl2) from Dictyostelium discoideum (Social amoeba).